The chain runs to 291 residues: ATP phosphoribosyltransferase (291 aa).

Belongs to the ATP phosphoribosyltransferase family. Long subfamily. Mg(2+) serves as cofactor.

The protein localises to the cytoplasm. The catalysed reaction is 1-(5-phospho-beta-D-ribosyl)-ATP + diphosphate = 5-phospho-alpha-D-ribose 1-diphosphate + ATP. The protein operates within amino-acid biosynthesis; L-histidine biosynthesis; L-histidine from 5-phospho-alpha-D-ribose 1-diphosphate: step 1/9. Feedback inhibited by histidine. Its function is as follows. Catalyzes the condensation of ATP and 5-phosphoribose 1-diphosphate to form N'-(5'-phosphoribosyl)-ATP (PR-ATP). Has a crucial role in the pathway because the rate of histidine biosynthesis seems to be controlled primarily by regulation of HisG enzymatic activity. In Trichlorobacter lovleyi (strain ATCC BAA-1151 / DSM 17278 / SZ) (Geobacter lovleyi), this protein is ATP phosphoribosyltransferase.